The primary structure comprises 225 residues: Urease accessory protein UreG (225 aa).

25-32 serves as a coordination point for GTP; the sequence is GPVGAGKT.

It belongs to the SIMIBI class G3E GTPase family. UreG subfamily. As to quaternary structure, homodimer. UreD, UreF and UreG form a complex that acts as a GTP-hydrolysis-dependent molecular chaperone, activating the urease apoprotein by helping to assemble the nickel containing metallocenter of UreC. The UreE protein probably delivers the nickel.

It is found in the cytoplasm. Functionally, facilitates the functional incorporation of the urease nickel metallocenter. This process requires GTP hydrolysis, probably effectuated by UreG. This Haemophilus influenzae (strain 86-028NP) protein is Urease accessory protein UreG.